Consider the following 566-residue polypeptide: Proline--tRNA ligase (566 aa).

Belongs to the class-II aminoacyl-tRNA synthetase family. ProS type 1 subfamily. As to quaternary structure, homodimer.

The protein localises to the cytoplasm. The catalysed reaction is tRNA(Pro) + L-proline + ATP = L-prolyl-tRNA(Pro) + AMP + diphosphate. Catalyzes the attachment of proline to tRNA(Pro) in a two-step reaction: proline is first activated by ATP to form Pro-AMP and then transferred to the acceptor end of tRNA(Pro). As ProRS can inadvertently accommodate and process non-cognate amino acids such as alanine and cysteine, to avoid such errors it has two additional distinct editing activities against alanine. One activity is designated as 'pretransfer' editing and involves the tRNA(Pro)-independent hydrolysis of activated Ala-AMP. The other activity is designated 'posttransfer' editing and involves deacylation of mischarged Ala-tRNA(Pro). The misacylated Cys-tRNA(Pro) is not edited by ProRS. In Staphylococcus saprophyticus subsp. saprophyticus (strain ATCC 15305 / DSM 20229 / NCIMB 8711 / NCTC 7292 / S-41), this protein is Proline--tRNA ligase.